Reading from the N-terminus, the 390-residue chain is RNA polymerase sigma factor SigA (390 aa).

Over residues Phe48–Asp57 the composition is skewed to acidic residues. Residues Phe48–Lys75 form a disordered region. Positions Lys62 to Lys75 are enriched in basic residues. Residues Met158–Thr228 form a sigma-70 factor domain-2 region. An Interaction with polymerase core subunit RpoC motif is present at residues Asp182–Gln185. Residues Glu237–Gln312 are sigma-70 factor domain-3. The segment at Val325–His378 is sigma-70 factor domain-4. Residues Leu351–Ala370 constitute a DNA-binding region (H-T-H motif).

It belongs to the sigma-70 factor family. RpoD/SigA subfamily. Interacts transiently with the RNA polymerase catalytic core.

Its subcellular location is the cytoplasm. Functionally, sigma factors are initiation factors that promote the attachment of RNA polymerase to specific initiation sites and are then released. This sigma factor is the primary sigma factor during exponential growth. The chain is RNA polymerase sigma factor SigA from Nostoc sp. (strain PCC 7120 / SAG 25.82 / UTEX 2576).